The chain runs to 199 residues: Recombination protein RecR (199 aa).

The segment at 57-72 (CSICGNITEDDPCDIC) adopts a C4-type zinc-finger fold. Residues 80-176 (KAVLVVEDSK…KVTRLAHGLS (97 aa)) form the Toprim domain.

The protein belongs to the RecR family.

Functionally, may play a role in DNA repair. It seems to be involved in an RecBC-independent recombinational process of DNA repair. It may act with RecF and RecO. In Pediococcus pentosaceus (strain ATCC 25745 / CCUG 21536 / LMG 10740 / 183-1w), this protein is Recombination protein RecR.